We begin with the raw amino-acid sequence, 345 residues long: Gibberellin receptor GID1A (345 aa).

Position 2 is an N-acetylalanine (Ala2). The Involved in the stabilization of the negatively charged intermediate by the formation of the oxyanion hole motif lies at 113–115 (HGG). Gibberellin A4 is bound by residues 115–116 (GS), Tyr127, and Ser191. Ser116, Tyr127, Ser191, and Phe238 together coordinate gibberellin A3. Ser191 is a catalytic residue. The active site involves Asp289. Position 320 (Gly320) interacts with gibberellin A4. Gly320 lines the gibberellin A3 pocket.

It belongs to the 'GDXG' lipolytic enzyme family. In terms of assembly, interacts (via N-terminus) with the DELLA proteins GAI, RGA, RGL1, RGL2 and RGL3 (via N-terminus) in a GA-dependent manner. As to expression, widely expressed.

It localises to the nucleus. Functionally, functions as a soluble gibberellin (GA) receptor. GA is an essential hormone that regulates growth and development in plants. Binds with high affinity the biologically active gibberellin GA4, but has no affinity for the biologically inactive GAs. In response to GA, interacts with specific DELLA proteins, known as repressors of GA-induced growth, and targets them for degradation via proteasome. Seems to be required for GA signaling that controls root growth, seed germination, stem elongation and flower development. Partially redundant with GID1B and GID1C. The protein is Gibberellin receptor GID1A (GID1A) of Arabidopsis thaliana (Mouse-ear cress).